Reading from the N-terminus, the 283-residue chain is tRNA-cytidine(32) 2-sulfurtransferase (283 aa).

A PP-loop motif motif is present at residues 37-42 (SGGKDS). [4Fe-4S] cluster-binding residues include cysteine 112, cysteine 115, and cysteine 203.

Belongs to the TtcA family. Homodimer. It depends on Mg(2+) as a cofactor. [4Fe-4S] cluster is required as a cofactor.

The protein resides in the cytoplasm. It carries out the reaction cytidine(32) in tRNA + S-sulfanyl-L-cysteinyl-[cysteine desulfurase] + AH2 + ATP = 2-thiocytidine(32) in tRNA + L-cysteinyl-[cysteine desulfurase] + A + AMP + diphosphate + H(+). Its pathway is tRNA modification. Its function is as follows. Catalyzes the ATP-dependent 2-thiolation of cytidine in position 32 of tRNA, to form 2-thiocytidine (s(2)C32). The sulfur atoms are provided by the cysteine/cysteine desulfurase (IscS) system. The chain is tRNA-cytidine(32) 2-sulfurtransferase from Legionella pneumophila (strain Corby).